The following is a 283-amino-acid chain: 5'-nucleotidase SurE (283 aa).

The a divalent metal cation site is built by aspartate 14, aspartate 15, serine 47, and asparagine 105.

The protein belongs to the SurE nucleotidase family. A divalent metal cation serves as cofactor.

Its subcellular location is the cytoplasm. The enzyme catalyses a ribonucleoside 5'-phosphate + H2O = a ribonucleoside + phosphate. Its function is as follows. Nucleotidase that shows phosphatase activity on nucleoside 5'-monophosphates. The polypeptide is 5'-nucleotidase SurE (Chlamydia trachomatis serovar D (strain ATCC VR-885 / DSM 19411 / UW-3/Cx)).